The primary structure comprises 88 residues: Alpha-latrotoxin-associated low molecular weight protein (88 aa).

An N-terminal signal peptide occupies residues 1 to 18 (MSKLFFVVFLCLIISVFA).

This sequence belongs to the arthropod CHH/MIH/GIH/VIH hormone family. Expressed by the venom gland.

The protein localises to the secreted. May increase the toxicity of alpha-latrotoxin and/or other venom components. Is non-toxic to mice and to the cockroach Periplaneta americana. In Latrodectus tredecimguttatus (Mediterranean black widow spider), this protein is Alpha-latrotoxin-associated low molecular weight protein.